We begin with the raw amino-acid sequence, 168 residues long: ATP synthase F(1) complex subunit delta, mitochondrial (168 aa).

Residues 1–22 (MLPAALLRHPGLRRLVLQARTY) constitute a mitochondrion transit peptide. N6-acetyllysine; alternate occurs at positions 136 and 165. Lysine 136 and lysine 165 each carry N6-succinyllysine; alternate.

Belongs to the ATPase epsilon chain family. In terms of assembly, component of the ATP synthase complex composed at least of ATP5F1A/subunit alpha, ATP5F1B/subunit beta, ATP5MC1/subunit c (homooctomer), MT-ATP6/subunit a, MT-ATP8/subunit 8, ATP5ME/subunit e, ATP5MF/subunit f, ATP5MG/subunit g, ATP5MK/subunit k, ATP5MJ/subunit j, ATP5F1C/subunit gamma, ATP5F1D/subunit delta, ATP5F1E/subunit epsilon, ATP5PF/subunit F6, ATP5PB/subunit b, ATP5PD/subunit d, ATP5PO/subunit OSCP. ATP synthase complex consists of a soluble F(1) head domain (subunits alpha(3) and beta(3)) - the catalytic core - and a membrane F(0) domain - the membrane proton channel (subunits c, a, 8, e, f, g, k and j). These two domains are linked by a central stalk (subunits gamma, delta, and epsilon) rotating inside the F1 region and a stationary peripheral stalk (subunits F6, b, d, and OSCP). Component of a complex composed at least by ATPIF1, ATP5F1A, ATP5F1B, ATP5F1C AND ATP5F1E.

The protein resides in the mitochondrion. It localises to the mitochondrion inner membrane. Its function is as follows. Subunit delta, of the mitochondrial membrane ATP synthase complex (F(1)F(0) ATP synthase or Complex V) that produces ATP from ADP in the presence of a proton gradient across the membrane which is generated by electron transport complexes of the respiratory chain. ATP synthase complex consist of a soluble F(1) head domain - the catalytic core - and a membrane F(1) domain - the membrane proton channel. These two domains are linked by a central stalk rotating inside the F(1) region and a stationary peripheral stalk. During catalysis, ATP synthesis in the catalytic domain of F(1) is coupled via a rotary mechanism of the central stalk subunits to proton translocation. In vivo, can only synthesize ATP although its ATP hydrolase activity can be activated artificially in vitro. With the central stalk subunit gamma, is essential for the biogenesis of F(1) catalytic part of the ATP synthase complex namely in the formation of F1 assembly intermediate. The polypeptide is ATP synthase F(1) complex subunit delta, mitochondrial (Rattus norvegicus (Rat)).